We begin with the raw amino-acid sequence, 685 residues long: E3 ubiquitin-protein ligase RNF6 (685 aa).

Composition is skewed to basic and acidic residues over residues 1-10 (MNQSRSRSDG), 17-29 (PQDHNHHENERRW), and 88-107 (DLRDGTNYRDSEVPRESSHE). Disordered stretches follow at residues 1-29 (MNQSRSRSDGGSEETLPQDHNHHENERRW), 81-107 (EQLASQPDLRDGTNYRDSEVPRESSHE), 121-142 (GNATRSGQNGNQTWRAVSRTNP), 168-273 (DYTD…REGQ), 286-345 (RSNV…RRRG), and 499-576 (EADS…NPNN). Polar residues-rich tracts occupy residues 199-213 (SQTSVNFNGSSSNIP), 250-264 (ASRTNFSSHTNQSGG), and 286-297 (RSNVTVRNTNQR). The span at 303–313 (LRSTSNSRSRS) shows a compositional bias: low complexity. Composition is skewed to polar residues over residues 314–325 (PIQRQSGTVYHN) and 519–528 (ELSNLGTDNN). The RING-type zinc-finger motif lies at 632 to 673 (CSVCISDYVTGNKLRQLPCMHEFHIHCIDRWLSENCTCPICR).

The protein belongs to the RNF12 family. As to expression, weakly expressed in peripheral blood, spleen, prostate, testis and ovary. According to a report, it is preferentially expressed in testis and ovary and hardly detected in other tissues.

The protein localises to the nucleus. The protein resides in the cytoplasm. Its subcellular location is the cell projection. It is found in the axon. It localises to the PML body. It carries out the reaction S-ubiquitinyl-[E2 ubiquitin-conjugating enzyme]-L-cysteine + [acceptor protein]-L-lysine = [E2 ubiquitin-conjugating enzyme]-L-cysteine + N(6)-ubiquitinyl-[acceptor protein]-L-lysine.. It participates in protein modification; protein ubiquitination. Functionally, E3 ubiquitin-protein ligase mediating 'Lys-48'-linked polyubiquitination of LIMK1 and its subsequent targeting to the proteasome for degradation. Negatively regulates axonal outgrowth through regulation of the LIMK1 turnover. Mediates 'Lys-6' and 'Lys-27'-linked polyubiquitination of AR/androgen receptor thereby modulating its transcriptional activity. May also bind DNA and function as a transcriptional regulator. Mediates polyubiquitination of QKI in macrophages, leading to its degradation. The polypeptide is E3 ubiquitin-protein ligase RNF6 (Homo sapiens (Human)).